The primary structure comprises 71 residues: Sec-independent protein translocase protein TatA (71 aa).

Residues 1 to 21 (MGSFSLLHWLVVLVIVLLVFG) form a helical membrane-spanning segment. Positions 43–71 (LREDDKPTDQLGSTSQSTASGPQQDHGKH) are disordered. Residues 52 to 65 (QLGSTSQSTASGPQ) are compositionally biased toward polar residues.

It belongs to the TatA/E family. As to quaternary structure, the Tat system comprises two distinct complexes: a TatABC complex, containing multiple copies of TatA, TatB and TatC subunits, and a separate TatA complex, containing only TatA subunits. Substrates initially bind to the TatABC complex, which probably triggers association of the separate TatA complex to form the active translocon.

It localises to the cell inner membrane. Functionally, part of the twin-arginine translocation (Tat) system that transports large folded proteins containing a characteristic twin-arginine motif in their signal peptide across membranes. TatA could form the protein-conducting channel of the Tat system. This Xylella fastidiosa (strain 9a5c) protein is Sec-independent protein translocase protein TatA.